The chain runs to 411 residues: Acetate kinase (411 aa).

N7 is a Mg(2+) binding site. An ATP-binding site is contributed by K14. Position 94 (R94) interacts with substrate. D151 acts as the Proton donor/acceptor in catalysis. Residues 211 to 215, 285 to 287, and 333 to 337 contribute to the ATP site; these read HLGNG, DMR, and GIGEN. E387 is a binding site for Mg(2+).

Belongs to the acetokinase family. Homodimer. It depends on Mg(2+) as a cofactor. The cofactor is Mn(2+).

The protein resides in the cytoplasm. It carries out the reaction acetate + ATP = acetyl phosphate + ADP. Its pathway is metabolic intermediate biosynthesis; acetyl-CoA biosynthesis; acetyl-CoA from acetate: step 1/2. Its function is as follows. Catalyzes the formation of acetyl phosphate from acetate and ATP. Can also catalyze the reverse reaction. This chain is Acetate kinase, found in Syntrophobacter fumaroxidans (strain DSM 10017 / MPOB).